Consider the following 492-residue polypeptide: NADH-quinone oxidoreductase subunit N (492 aa).

Helical transmembrane passes span 16 to 36, 44 to 64, 81 to 101, 111 to 131, 134 to 154, 168 to 188, 210 to 230, 244 to 264, 276 to 296, 306 to 326, 332 to 352, 382 to 402, 423 to 443, and 463 to 483; these read LLIPMCISLFGGIILLGVGVF, LYITISMLFVVLNLGFLFLEG, ISLLTQIIMLLATFVLLLFFM, GAEFYALLLFSIAGFAFMASS, LILILLGLETASLCLYALIAL, FIMGALATTFYAFGAMLLYAA, ILVFAGFVFLLCALGFKVTLV, NALLAAFIAIVPKIVTFAVII, AFVEYTLYVIVVLTMTIPNLI, MLAYSSISHSGFVLAAVLINT, VIFFYWFLFLFANIGAFGILW, LAILLTLFMFALAGIPPFCVF, IMAINSIIAGFYYLKLVIYIF, and FALSITAFVSVACLFMVQNLL.

It belongs to the complex I subunit 2 family. As to quaternary structure, NDH-1 is composed of 14 different subunits. Subunits NuoA, H, J, K, L, M, N constitute the membrane sector of the complex.

The protein localises to the cell inner membrane. It carries out the reaction a quinone + NADH + 5 H(+)(in) = a quinol + NAD(+) + 4 H(+)(out). Functionally, NDH-1 shuttles electrons from NADH, via FMN and iron-sulfur (Fe-S) centers, to quinones in the respiratory chain. The immediate electron acceptor for the enzyme in this species is believed to be ubiquinone. Couples the redox reaction to proton translocation (for every two electrons transferred, four hydrogen ions are translocated across the cytoplasmic membrane), and thus conserves the redox energy in a proton gradient. This is NADH-quinone oxidoreductase subunit N from Helicobacter hepaticus (strain ATCC 51449 / 3B1).